We begin with the raw amino-acid sequence, 559 residues long: Regulatory protein PHO2 (559 aa).

4 disordered regions span residues 16-88 (ATDL…KGEA), 132-158 (LRKK…DYDR), 293-333 (INSN…AKDN), and 534-559 (PTDS…HRWI). 2 stretches are compositionally biased toward low complexity: residues 24–52 (HDQQ…IQTQ) and 63–74 (NDMSASSNASDS). Residues 77 to 136 (QRPKRTRAKGEALDVLKRKFEINPTPSLVERKKISDLIGMPEKNVRIWFQNRRAKLRKKQ) constitute a DNA-binding region (homeobox). Residues 141–151 (KDTIPSSQSRD) show a composition bias toward polar residues. Residues 293–307 (INSNNTSDKNNSNTN) show a composition bias toward low complexity. Residues 308-323 (NDDDNDDNSNEDNDNS) show a composition bias toward acidic residues. Residues 324-333 (SEDKRNAKDN) are compositionally biased toward basic and acidic residues. Thr-542 is modified (phosphothreonine).

It is found in the nucleus. In terms of biological role, regulator in phosphate metabolism and acts as a derepressor of another central regulator PHO5. Binds to the upstream activator sequence (UAS) of PHO5. It also binds to the TRP4, HIS4, and CYC1 promoters. This is Regulatory protein PHO2 (PHO2) from Saccharomyces cerevisiae (strain ATCC 204508 / S288c) (Baker's yeast).